The primary structure comprises 197 residues: Small ribosomal subunit protein uS4B (197 aa).

The 63-residue stretch at Ser-88–Asn-150 folds into the S4 RNA-binding domain.

This sequence belongs to the universal ribosomal protein uS4 family. As to quaternary structure, part of the 30S ribosomal subunit. Contacts protein S5. The interaction surface between S4 and S5 is involved in control of translational fidelity.

In terms of biological role, one of the primary rRNA binding proteins, it binds directly to 16S rRNA where it nucleates assembly of the body of the 30S subunit. With S5 and S12 plays an important role in translational accuracy. In Clostridium perfringens (strain 13 / Type A), this protein is Small ribosomal subunit protein uS4B (rpsD2).